The sequence spans 297 residues: Bifunctional protein FolD (297 aa).

NADP(+) is bound by residues 164–166 (GRS), S193, and I234.

This sequence belongs to the tetrahydrofolate dehydrogenase/cyclohydrolase family. As to quaternary structure, homodimer.

The enzyme catalyses (6R)-5,10-methylene-5,6,7,8-tetrahydrofolate + NADP(+) = (6R)-5,10-methenyltetrahydrofolate + NADPH. The catalysed reaction is (6R)-5,10-methenyltetrahydrofolate + H2O = (6R)-10-formyltetrahydrofolate + H(+). It participates in one-carbon metabolism; tetrahydrofolate interconversion. Functionally, catalyzes the oxidation of 5,10-methylenetetrahydrofolate to 5,10-methenyltetrahydrofolate and then the hydrolysis of 5,10-methenyltetrahydrofolate to 10-formyltetrahydrofolate. The polypeptide is Bifunctional protein FolD (Halobacterium salinarum (strain ATCC 700922 / JCM 11081 / NRC-1) (Halobacterium halobium)).